The following is a 701-amino-acid chain: Phytyl ester synthase 2, chloroplastic (701 aa).

The transit peptide at 1–65 (MAVTVLPSVS…KNNDENRATV (65 aa)) directs the protein to the chloroplast. The interval 37 to 64 (SVTSTSSPPTPSSGVQRRRKNNDENRAT) is disordered.

The protein belongs to the diacylglycerol acyltransferase family.

Its subcellular location is the plastid. The protein resides in the chloroplast. It is found in the plastoglobule. It carries out the reaction a 1,2-diacyl-3-O-(beta-D-galactosyl)-sn-glycerol + a 1,2-diacylglycerol = an acyl-3-O-(beta-D-galactosyl)-sn-glycerol + a triacylglycerol. The enzyme catalyses a 1,2-diacylglycerol + a fatty acyl-CoA = a triacylglycerol + CoA. It catalyses the reaction a fatty acyl-[ACP] + a 1,2-diacylglycerol = a triacylglycerol + holo-[ACP]. The catalysed reaction is phytol + a fatty acyl-CoA = a fatty acid phytyl ester + CoA. It carries out the reaction phytol + tetradecanoyl-CoA = tetradecanoate phytyl ester + CoA. The enzyme catalyses a 1,3-diacylglycerol + a fatty acyl-CoA = a triacylglycerol + CoA. It catalyses the reaction 1,2-dihexanoylglycerol + tetradecanoyl-CoA = 1,2-dihexanoyl-3-tetradecanoylglycerol + CoA. The catalysed reaction is 1,2-dihexanoylglycerol + hexadecanoyl-CoA = 1,2-dihexanoyl-3-hexadecanoylglycerol + CoA. It carries out the reaction 1,2-dihexanoylglycerol + octadecanoyl-CoA = 1,2-dihexanoyl-3-octadecanoylglycerol + CoA. The enzyme catalyses (7Z,10Z,13Z)-hexadecatrienoyl-CoA + 1,2-dihexanoylglycerol = 1,2-dihexanoyl-3-(7Z,10Z,13Z-hexadecatrienoyl)-glycerol + CoA. It catalyses the reaction 1,2-dihexanoylglycerol + (9Z)-octadecenoyl-CoA = 1,2-dihexanoyl-3-(9Z-octadecenoyl)-glycerol + CoA. The catalysed reaction is 1,2-dihexanoylglycerol + (9Z,12Z,15Z)-octadecatrienoyl-CoA = 1,2-dihexanoyl-3-(9Z,12Z,15Z-octadecatrienoyl)-glycerol + CoA. It carries out the reaction phytol + decanoyl-CoA = decanoate phytyl ester + CoA. The enzyme catalyses (7Z,10Z,13Z)-hexadecatrienoyl-CoA + phytol = (7Z,10Z,13Z)-hexadecatrienoate phytyl ester + CoA. It catalyses the reaction phytol + dodecanoyl-CoA = dodecanoate phytyl ester + CoA. Acyltransferase involved in fatty acid phytyl ester synthesis in chloroplasts, a process required for the maintenance of the photosynthetic membrane integrity during abiotic stress and senescence. Exhibits phytyl ester synthesis and diacylglycerol acyltransferase activities with broad substrate specificities, and can employ acyl-CoAs, acyl carrier proteins, and galactolipids as acyl donors. The protein is Phytyl ester synthase 2, chloroplastic of Arabidopsis thaliana (Mouse-ear cress).